A 235-amino-acid polypeptide reads, in one-letter code: Thymidylate kinase (235 aa).

Residue 10-17 participates in ATP binding; it reads GINGVEKS.

The protein belongs to the thymidylate kinase family.

It catalyses the reaction dTMP + ATP = dTDP + ADP. It functions in the pathway pyrimidine metabolism; dTTP biosynthesis. In terms of biological role, catalyzes the conversion of dTMP to dTDP. The chain is Thymidylate kinase (TMK) from African swine fever virus (isolate Pig/Kenya/KEN-50/1950) (ASFV).